The chain runs to 214 residues: NKG2-D type II integral membrane protein (214 aa).

The Cytoplasmic portion of the chain corresponds to 1–56; it reads MGWIRDRRSPSSMEIRELHNRDVINRGAFKSRQKRTQTLITSKCGENPSPFFLARS. Residues 57-77 traverse the membrane as a helical; Signal-anchor for type II membrane protein segment; the sequence is IAIAMGIRFIVMVMIYSGMII. The Extracellular portion of the chain corresponds to 78–214; the sequence is NLLFNQEAPS…NTYICMKRTV (137 aa). Cystine bridges form between Cys94–Cys103 and Cys97–Cys108. The region spanning 98 to 210 is the C-type lectin domain; that stretch reads PKNWICYRNS…CLTLNTYICM (113 aa). 4 N-linked (GlcNAc...) asparagine glycosylation sites follow: Asn113, Asn129, Asn161, and Asn184. Intrachain disulfides connect Cys125/Cys209 and Cys187/Cys201.

In terms of assembly, homodimer; disulfide-linked. Heterohexamer composed of two subunits of KLRK1 and four subunits of HCST/DAP10. Interacts (via transmembrane domain) with HCST/DAP10 (via transmembrane domain); the interaction is required for KLRK1 NK cell surface and induces NK cell-mediated cytotoxicity. Can form disulfide-bonded heterodimer with CD94. Interacts with CEACAM1; recruits PTPN6 that dephosphorylates VAV1. Detected in peripheral blood leukocytes, macrophages, monocytes and natural killer cells.

The protein localises to the cell membrane. Functions as an activating and costimulatory receptor involved in immunosurveillance upon binding to various cellular stress-inducible ligands displayed at the surface of autologous tumor cells and virus-infected cells. Provides both stimulatory and costimulatory innate immune responses on activated killer (NK) cells, leading to cytotoxic activity. Acts as a costimulatory receptor for T-cell receptor (TCR) in CD8(+) T-cell-mediated adaptive immune responses by amplifying T-cell activation. Stimulates perforin-mediated elimination of ligand-expressing tumor cells. Signaling involves calcium influx, culminating in the expression of TNF-alpha. Participates in NK cell-mediated bone marrow graft rejection. May play a regulatory role in differentiation and survival of NK cells. Binds to ligands belonging to various subfamilies of MHC class I-related glycoproteins. The polypeptide is NKG2-D type II integral membrane protein (KLRK1) (Sus scrofa (Pig)).